The following is a 24-amino-acid chain: Probable caffeoyl-CoA O-methyltransferase (24 aa).

This sequence belongs to the class I-like SAM-binding methyltransferase superfamily. Cation-dependent O-methyltransferase family. CCoAMT subfamily. A divalent metal cation serves as cofactor.

It carries out the reaction (E)-caffeoyl-CoA + S-adenosyl-L-methionine = (E)-feruloyl-CoA + S-adenosyl-L-homocysteine + H(+). The protein operates within aromatic compound metabolism; phenylpropanoid biosynthesis. In terms of biological role, methylates caffeoyl-CoA to feruloyl-CoA and 5-hydroxyferuloyl-CoA to sinapoyl-CoA. Plays a role in the synthesis of feruloylated polysaccharides. Involved in the reinforcement of the plant cell wall. Also involved in the responding to wounding or pathogen challenge by the increased formation of cell wall-bound ferulic acid polymers. In Pinus pinaster (Maritime pine), this protein is Probable caffeoyl-CoA O-methyltransferase.